The primary structure comprises 334 residues: Beta-1,3-N-acetylglucosaminyltransferase radical fringe (334 aa).

Residues 1 to 6 (MSRVRR) are Cytoplasmic-facing. A helical; Signal-anchor for type II membrane protein membrane pass occupies residues 7 to 29 (VLCRACLALAAVLAVLLLLPLPL). The Lumenal portion of the chain corresponds to 30–334 (PLPLPLPRAP…MKNRGKEAFQ (305 aa)). Substrate is bound at residue Arg-77. N-linked (GlcNAc...) asparagine glycosylation is present at Asn-116. 2 disulfides stabilise this stretch: Cys-117–Cys-128 and Cys-146–Cys-210. Asp-150 contributes to the substrate binding site. A Mn(2+)-binding site is contributed by Asp-151. The active site involves Asp-240. His-264 is a Mn(2+) binding site. Cys-314 and Cys-323 are oxidised to a cystine.

Belongs to the glycosyltransferase 31 family. Mn(2+) is required as a cofactor. In terms of tissue distribution, most abundantly expressed in adult brain. Expressed in most neurons of the brain but not in glial cells. Also detected to a lower extent in adult lung and kidney.

It is found in the golgi apparatus membrane. The enzyme catalyses 3-O-(alpha-L-fucosyl)-L-threonyl-[EGF-like domain protein] + UDP-N-acetyl-alpha-D-glucosamine = 3-O-(N-acetyl-beta-D-glucosaminyl-(1-&gt;3)-alpha-L-fucosyl)-L-threonyl-[EGF-like domain protein] + UDP + H(+). It carries out the reaction 3-O-(alpha-L-fucosyl)-L-seryl-[EGF-like domain protein] + UDP-N-acetyl-alpha-D-glucosamine = 3-O-(N-acetyl-beta-D-glucosaminyl-(1-&gt;3)-alpha-L-fucosyl)-L-seryl-[EGF-like domain protein] + UDP + H(+). Its function is as follows. Glycosyltransferase that initiates the elongation of O-linked fucose residues attached to EGF-like repeats in the extracellular domain of Notch molecules. Modulates NOTCH1 activity by modifying O-fucose residues at specific EGF-like domains resulting in enhancement of NOTCH1 activation by DLL1 and JAG1. Inhibits Notch signaling in postmitotic neurons of the brain. It may play a role in adult brain and in neurogenesis. It may play a role in limb development. The polypeptide is Beta-1,3-N-acetylglucosaminyltransferase radical fringe (Rattus norvegicus (Rat)).